The primary structure comprises 368 residues: Quinolinate synthase (368 aa).

2 residues coordinate iminosuccinate: His46 and Ser63. Cys110 provides a ligand contact to [4Fe-4S] cluster. Iminosuccinate contacts are provided by residues 141–143 (YVN) and Ser162. Cys230 contacts [4Fe-4S] cluster. Residues 256-258 (HPE) and Thr273 each bind iminosuccinate. Residue Cys320 coordinates [4Fe-4S] cluster.

It belongs to the quinolinate synthase family. Type 3 subfamily. [4Fe-4S] cluster is required as a cofactor.

It localises to the cytoplasm. The enzyme catalyses iminosuccinate + dihydroxyacetone phosphate = quinolinate + phosphate + 2 H2O + H(+). Its pathway is cofactor biosynthesis; NAD(+) biosynthesis; quinolinate from iminoaspartate: step 1/1. Functionally, catalyzes the condensation of iminoaspartate with dihydroxyacetone phosphate to form quinolinate. This chain is Quinolinate synthase, found in Bacillus cereus (strain ATCC 10987 / NRS 248).